The chain runs to 714 residues: Polyribonucleotide nucleotidyltransferase (714 aa).

Positions 496 and 502 each coordinate Mg(2+). The KH domain maps to 562–621 (PRLLTIKIDPDLIGMVIGPGGKTIKGITEQTRAKVDIADDGTVTIASSESENAEKAKRLI). In terms of domain architecture, S1 motif spans 631–699 (GDVYFGKVTR…NKGRINLTRL (69 aa)).

Belongs to the polyribonucleotide nucleotidyltransferase family. Mg(2+) serves as cofactor.

The protein resides in the cytoplasm. The enzyme catalyses RNA(n+1) + phosphate = RNA(n) + a ribonucleoside 5'-diphosphate. Functionally, involved in mRNA degradation. Catalyzes the phosphorolysis of single-stranded polyribonucleotides processively in the 3'- to 5'-direction. The chain is Polyribonucleotide nucleotidyltransferase from Picosynechococcus sp. (strain ATCC 27264 / PCC 7002 / PR-6) (Agmenellum quadruplicatum).